A 238-amino-acid polypeptide reads, in one-letter code: Ribonuclease 3 (238 aa).

An RNase III domain is found at 11–136; that stretch reads RARLEAAIGY…LIAAIYLDGG (126 aa). Residue glutamate 49 participates in Mg(2+) binding. The active site involves aspartate 53. Mg(2+) is bound by residues aspartate 122 and glutamate 125. The active site involves glutamate 125. The region spanning 161 to 230 is the DRBM domain; that stretch reads DAKTELQEWA…AMKLLEREGV (70 aa). The segment covering 180-193 has biased composition (basic and acidic residues); sequence YRTEDRSGPDHDPR. The tract at residues 180–215 is disordered; it reads YRTEDRSGPDHDPRFTVTVEVDGIDPETGVDRSKRG.

It belongs to the ribonuclease III family. Homodimer. The cofactor is Mg(2+).

It is found in the cytoplasm. The catalysed reaction is Endonucleolytic cleavage to 5'-phosphomonoester.. In terms of biological role, digests double-stranded RNA. Involved in the processing of primary rRNA transcript to yield the immediate precursors to the large and small rRNAs (23S and 16S). Processes some mRNAs, and tRNAs when they are encoded in the rRNA operon. Processes pre-crRNA and tracrRNA of type II CRISPR loci if present in the organism. The sequence is that of Ribonuclease 3 from Sinorhizobium medicae (strain WSM419) (Ensifer medicae).